The chain runs to 546 residues: Parathyroid hormone 2 receptor (546 aa).

Positions 1-24 are cleaved as a signal peptide; the sequence is MAWLETFTYICGWLILSSCLLVRA. At 27–143 the chain is on the extracellular side; sequence DSDGTITIEE…GKQEFFESLY (117 aa). N-linked (GlcNAc...) asparagine glycans are attached at residues Asn-51, Asn-106, Asn-116, and Asn-121. A helical membrane pass occupies residues 144-167; it reads ILYTVGYSISFGSLAVAILIIGYF. The Cytoplasmic portion of the chain corresponds to 168–174; sequence RRLHCTR. A helical membrane pass occupies residues 175 to 194; that stretch reads NYIHLHLFVSFMLRAMSIFV. Over 195 to 235 the chain is Extracellular; that stretch reads KDRVAQAHLGVEALQSLVMQGDLQNFIGGPSVDKSQYVGCK. The chain crosses the membrane as a helical span at residues 236 to 258; that stretch reads IAVVMFIYFLATNYYWILVEGLY. Topologically, residues 259–273 are cytoplasmic; sequence LHNLIFVSFFSDTKY. Residues 274 to 295 traverse the membrane as a helical segment; it reads LWGFISIGWGFPAVFVVAWAVA. Residues 296–313 are Extracellular-facing; that stretch reads RATLADTRCWELSAGDRW. Residues 314–334 traverse the membrane as a helical segment; it reads IYQAPILAAIGLNFILFLNTV. At 335 to 361 the chain is on the cytoplasmic side; that stretch reads RVLATKIWETNAVGHDMRKQYRKLAKS. The helical transmembrane segment at 362-380 threads the bilayer; the sequence is TLVLVLVFGVHYIVFVCQP. The Extracellular segment spans residues 381-391; that stretch reads HSFSGLWWEIR. A helical transmembrane segment spans residues 392–414; sequence MHCELFFNSFQGFFVSIVYCYCN. Topologically, residues 415-546 are cytoplasmic; sequence GEVQAEVKKM…EGCKGETHPI (132 aa). The tract at residues 497-546 is disordered; the sequence is SEQDCQTHSPPEETKEGHRRQGDDSPVMESSRPVAFTLDTEGCKGETHPI. 2 stretches are compositionally biased toward basic and acidic residues: residues 506–519 and 537–546; these read PPEE…RQGD and EGCKGETHPI.

The protein belongs to the G-protein coupled receptor 2 family. Binds to TIPF39/TIP39.

The protein resides in the cell membrane. This is a specific receptor for parathyroid hormone. The activity of this receptor is mediated by G proteins which activate adenylyl cyclase. PTH2R may be responsible for PTH effects in a number of physiological systems. It may play a significant role in pancreatic function. PTH2R presence in neurons indicates that it may function as a neurotransmitter receptor. The sequence is that of Parathyroid hormone 2 receptor (Pth2r) from Mus musculus (Mouse).